The primary structure comprises 177 residues: Large ribosomal subunit protein uL6 (177 aa).

In terms of assembly, part of the 50S ribosomal subunit.

In terms of biological role, this protein binds to the 23S rRNA, and is important in its secondary structure. It is located near the subunit interface in the base of the L7/L12 stalk, and near the tRNA binding site of the peptidyltransferase center. The sequence is that of Large ribosomal subunit protein uL6 from Rhodopseudomonas palustris (strain ATCC BAA-98 / CGA009).